The primary structure comprises 221 residues: Large ribosomal subunit protein uL16x (221 aa).

This sequence belongs to the universal ribosomal protein uL16 family. In terms of assembly, component of the small ribosomal subunit. Mature ribosomes consist of a small (40S) and a large (60S) subunit. The 40S subunit contains about 33 different proteins and 1 molecule of RNA (18S). The 60S subunit contains about 49 different proteins and 3 molecules of RNA (25S, 5.8S and 5S).

This chain is Large ribosomal subunit protein uL16x (RPL10C), found in Arabidopsis thaliana (Mouse-ear cress).